A 106-amino-acid polypeptide reads, in one-letter code: Ribosomal protein eL42-like (106 aa).

The segment at 26–53 is disordered; sequence YKKGKDSLYAQGRRRYDRKQSGYGGQTK. An N6-methyllysine modification is found at Lys53.

Belongs to the eukaryotic ribosomal protein eL42 family. Ubiquitously expressed.

The protein localises to the cytoplasm. The chain is Ribosomal protein eL42-like (RPL36AL) from Homo sapiens (Human).